The sequence spans 283 residues: Shikimate dehydrogenase (NADP(+)) (283 aa).

Residues 19–21 (SFS) and T66 each bind shikimate. The active-site Proton acceptor is the K70. NADP(+) is bound at residue E82. Residues N91 and D106 each coordinate shikimate. Residues 129–133 (GAGGA) and I225 each bind NADP(+). Position 227 (Y227) interacts with shikimate. Residue G248 coordinates NADP(+).

It belongs to the shikimate dehydrogenase family. In terms of assembly, homodimer.

It catalyses the reaction shikimate + NADP(+) = 3-dehydroshikimate + NADPH + H(+). Its pathway is metabolic intermediate biosynthesis; chorismate biosynthesis; chorismate from D-erythrose 4-phosphate and phosphoenolpyruvate: step 4/7. Functionally, involved in the biosynthesis of the chorismate, which leads to the biosynthesis of aromatic amino acids. Catalyzes the reversible NADPH linked reduction of 3-dehydroshikimate (DHSA) to yield shikimate (SA). This Methanosphaera stadtmanae (strain ATCC 43021 / DSM 3091 / JCM 11832 / MCB-3) protein is Shikimate dehydrogenase (NADP(+)).